Reading from the N-terminus, the 100-residue chain is Small ribosomal subunit protein uS14 (100 aa).

The protein belongs to the universal ribosomal protein uS14 family. Part of the 30S ribosomal subunit. Contacts proteins S3 and S10.

Functionally, binds 16S rRNA, required for the assembly of 30S particles and may also be responsible for determining the conformation of the 16S rRNA at the A site. The sequence is that of Small ribosomal subunit protein uS14 from Prochlorococcus marinus (strain AS9601).